Reading from the N-terminus, the 189-residue chain is Elongation factor P (189 aa).

The protein belongs to the elongation factor P family.

It localises to the cytoplasm. It participates in protein biosynthesis; polypeptide chain elongation. Functionally, involved in peptide bond synthesis. Stimulates efficient translation and peptide-bond synthesis on native or reconstituted 70S ribosomes in vitro. Probably functions indirectly by altering the affinity of the ribosome for aminoacyl-tRNA, thus increasing their reactivity as acceptors for peptidyl transferase. This chain is Elongation factor P, found in Campylobacter jejuni subsp. doylei (strain ATCC BAA-1458 / RM4099 / 269.97).